We begin with the raw amino-acid sequence, 58 residues long: Small ribosomal subunit protein eS30 (58 aa).

A disordered region spans residues 1–58; it reads MGKVHGSLARAGKVKNQTPKVPKLDKKKRLTGRAKKRQLYNRRFSDNGGRKKGPNSKA. The span at 25 to 40 shows a compositional bias: basic residues; the sequence is DKKKRLTGRAKKRQLY.

Belongs to the eukaryotic ribosomal protein eS30 family. Component of the small ribosomal subunit. Mature ribosomes consist of a small (40S) and a large (60S) subunit. The 40S subunit contains about 32 different proteins and 1 molecule of RNA (18S). The 60S subunit contains about 42 different proteins and 3 molecules of RNA (28S, 5.8S and 5S).

Its subcellular location is the cytoplasm. Functionally, component of the ribosome, a large ribonucleoprotein complex responsible for the synthesis of proteins in the cell. The small ribosomal subunit (SSU) binds messenger RNAs (mRNAs) and translates the encoded message by selecting cognate aminoacyl-transfer RNA (tRNA) molecules. The large subunit (LSU) contains the ribosomal catalytic site termed the peptidyl transferase center (PTC), which catalyzes the formation of peptide bonds, thereby polymerizing the amino acids delivered by tRNAs into a polypeptide chain. The nascent polypeptides leave the ribosome through a tunnel in the LSU and interact with protein factors that function in enzymatic processing, targeting, and the membrane insertion of nascent chains at the exit of the ribosomal tunnel. The protein is Small ribosomal subunit protein eS30 of Plasmodium falciparum (isolate 3D7).